The primary structure comprises 121 residues: Large ribosomal subunit protein bL12 (121 aa).

This sequence belongs to the bacterial ribosomal protein bL12 family. Homodimer. Part of the ribosomal stalk of the 50S ribosomal subunit. Forms a multimeric L10(L12)X complex, where L10 forms an elongated spine to which 2 to 4 L12 dimers bind in a sequential fashion. Binds GTP-bound translation factors.

Its function is as follows. Forms part of the ribosomal stalk which helps the ribosome interact with GTP-bound translation factors. Is thus essential for accurate translation. This is Large ribosomal subunit protein bL12 from Ureaplasma urealyticum serovar 10 (strain ATCC 33699 / Western).